We begin with the raw amino-acid sequence, 852 residues long: Protein SEY1 (852 aa).

The Cytoplasmic portion of the chain corresponds to 1-738 (MNGHFAAIGN…KRSAIGGITQ (738 aa)). The 248-residue stretch at 47 to 294 (GFNYHLISVF…IPADGLSVYA (248 aa)) folds into the GB1/RHD3-type G domain. A GTP-binding site is contributed by 57–64 (GSQSTGKS). Positions 475–500 (QYKLFEKELDEVSARLRKEEMRRLAI) form a coiled coil. The chain crosses the membrane as a helical span at residues 739-759 (VPLYFYVILLILGWNEILMVL). At 760 to 762 (RNP) the chain is on the lumenal side. The chain crosses the membrane as a helical span at residues 763 to 783 (FLILLILVMGGGTYIAYSLNL). Residues 784–852 (LGPMMQMSNA…AQDISDDDDI (69 aa)) lie on the Cytoplasmic side of the membrane.

The protein belongs to the TRAFAC class dynamin-like GTPase superfamily. GB1/RHD3 GTPase family. RHD3 subfamily.

The protein resides in the endoplasmic reticulum membrane. Functionally, cooperates with the reticulon proteins and tubule-shaping DP1 family proteins to generate and maintain the structure of the tubular endoplasmic reticulum network. Has GTPase activity, which is required for its function in ER organization. This Podospora anserina (strain S / ATCC MYA-4624 / DSM 980 / FGSC 10383) (Pleurage anserina) protein is Protein SEY1.